Reading from the N-terminus, the 186-residue chain is Signal peptidase I (186 aa).

The Cytoplasmic segment spans residues 1 to 19 (MTEEKSTNKKNSLFEWVKA). Residues 20–40 (IIIAVVLALLIRAFLFEPYLV) traverse the membrane as a helical segment. Over 41 to 186 (EGTSMDPTLH…FPFNEIRKTD (146 aa)) the chain is Extracellular. Active-site residues include Ser44 and Lys86.

It belongs to the peptidase S26 family.

The protein localises to the cell membrane. It carries out the reaction Cleavage of hydrophobic, N-terminal signal or leader sequences from secreted and periplasmic proteins.. The sequence is that of Signal peptidase I (lepB) from Bacillus licheniformis.